The chain runs to 705 residues: Zinc finger protein 770 (705 aa).

Lys16 is covalently cross-linked (Glycyl lysine isopeptide (Lys-Gly) (interchain with G-Cter in SUMO2)). C2H2-type zinc fingers lie at residues 31 to 53 (YICN…YLIH), 59 to 81 (FECD…QLTH), and 85 to 107 (FSCN…QQLH). Glycyl lysine isopeptide (Lys-Gly) (interchain with G-Cter in SUMO2) cross-links involve residues Lys116, Lys124, and Lys149. 3 C2H2-type zinc fingers span residues 164–186 (HACT…SLIH), 192–214 (FKCV…QLTH), and 220–242 (FQCC…KQIH). A Glycyl lysine isopeptide (Lys-Gly) (interchain with G-Cter in SUMO2) cross-link involves residue Lys266. A C2H2-type 7; degenerate zinc finger spans residues 298-322 (FQCSECEECFESEQILNGHKCLPAR). C2H2-type zinc fingers lie at residues 485-507 (CPCD…YLIH), 513-535 (FDCN…KLTH), 640-662 (YQCS…YLIH), and 668-690 (FECS…QLTH). Lys698 is covalently cross-linked (Glycyl lysine isopeptide (Lys-Gly) (interchain with G-Cter in SUMO2)).

It belongs to the krueppel C2H2-type zinc-finger protein family.

It is found in the nucleus. Functionally, may be involved in transcriptional regulation. This chain is Zinc finger protein 770 (Znf770), found in Mus musculus (Mouse).